The chain runs to 2083 residues: Nonribosomal peptide synthetase sidD (2083 aa).

The tract at residues 251–650 (TYRQIDQYSS…GEIESQLRAR (400 aa)) is adenylation 1. Residues 764 to 840 (RELSDLERRL…AMASVVRICD (77 aa)) enclose the Carrier 1 domain. The residue at position 801 (Ser801) is an O-(pantetheine 4'-phosphoryl)serine. Residues 876–1146 (EDIYPCTPTQ…IATVPIRVRI (271 aa)) form a condensation 1 region. An adenylation 2 region spans residues 1336–1421 (LSPIGCVGEL…TEIERHLAEH (86 aa)). The region spanning 1557–1633 (NHLSASESIL…DAARVMKVDE (77 aa)) is the Carrier 2 domain. Ser1594 carries the post-translational modification O-(pantetheine 4'-phosphoryl)serine. The interval 1674–1946 (DVLPVTDSQD…YQLTPVRVPF (273 aa)) is condensation 2.

This sequence belongs to the NRP synthetase family.

It participates in siderophore biosynthesis. Functionally, nonribosomal peptide synthetase; part of the siderophore biosynthetic pathway. Aspergillus fumigatus produces four types of siderophores, low-molecular-mass iron chelators, including excreted fusarinine C (FsC) and triacetylfusarinine C (TAFC) for iron uptake; and intacellular ferricrocin (FC) for hyphal and hydroxyferricrocin (HFC) for conidial iron distribution and storage. TAFC consists of three N(2)-acetyl-N(5)-anhydromevalonyl-N(5)-hydroxyornithine residues cyclically linked by ester bonds; FC is a cyclic hexapeptide with the structure Gly-Ser-Gly-(N(5)-acetyl-N(5)-hydroxyornithine)x3. The biosynthesis of all four siderophores depends on the hydroxylation of ornithine, catalyzed by the monooxygenase sidA. Subsequently, the pathways for biosynthesis of extra- and intracellular siderophores split. For biosynthesis of extracellular siderophores, the transacylase sidF transfers anhydromevalonyl to N(5)-hydroxyornithine. The required anhydromevalonyl-CoA moiety is derived from mevalonate by CoA ligation and dehydration catalyzed by sidI and sidH respectively. The acetylation of N(5)-hydroxyornithine for FC biosynthesis involves the constitutively expressed sidL. FC is hydroxylated to HFC by an as yet uncharacterized enzyme during conidiation. Assembly of fusarinine C (FsC) and FC is catalyzed by two different nonribosomal peptide synthetases (NRPS), sidD and sidC respectively. Subsequently, sidG catalyzes N2-acetylation of FsC for forming TAFC. Both extra- and intracellular siderophores are crucial for growth during iron limitation and virulence. This Aspergillus fumigatus (strain ATCC MYA-4609 / CBS 101355 / FGSC A1100 / Af293) (Neosartorya fumigata) protein is Nonribosomal peptide synthetase sidD.